A 348-amino-acid polypeptide reads, in one-letter code: MNGTEGPNFYVPFSNKTGVVRSPFEYPQYYLAEPWQFSMLAAYMFLLIVLGFPINFLTLYVTVQHKKLRTPLNYILLNLAVADLFMVFGGFTTTLYTSLHGYFVFGPTGCNLEGFFATLGGEIALWSLVVLAIERYVVVCKPMSNFRFGENHAIMGVAFTWVMALACAAPPLVGWSRYIPEGMQCSCGIDYYTLKPEVNNESFVIYMFVVHFTIPMIVIFFCYGQLVFTVKEAAAQQQESATTQKAEKEVTRMVIIMVIAFLICWVPYASVAFYIFTHQGSNFGPIFMTLPAFFAKSSSIYNPVIYIMMNKQFRNCMLTTLCCGKNPLGDDEASTTGSKTETSQVAPA.

Methionine 1 is subject to N-acetylmethionine. The Extracellular segment spans residues 1–36 (MNGTEGPNFYVPFSNKTGVVRSPFEYPQYYLAEPWQ). N-linked (GlcNAc...) asparagine glycosylation is found at asparagine 2 and asparagine 15. The helical transmembrane segment at 37–61 (FSMLAAYMFLLIVLGFPINFLTLYV) threads the bilayer. Residues 62–73 (TVQHKKLRTPLN) are Cytoplasmic-facing. A helical membrane pass occupies residues 74–96 (YILLNLAVADLFMVFGGFTTTLY). Over 97 to 110 (TSLHGYFVFGPTGC) the chain is Extracellular. Cysteine 110 and cysteine 187 form a disulfide bridge. The helical transmembrane segment at 111–133 (NLEGFFATLGGEIALWSLVVLAI) threads the bilayer. A 'Ionic lock' involved in activated form stabilization motif is present at residues 134 to 136 (ERY). Residues 134–152 (ERYVVVCKPMSNFRFGENH) lie on the Cytoplasmic side of the membrane. The chain crosses the membrane as a helical span at residues 153–173 (AIMGVAFTWVMALACAAPPLV). The Extracellular portion of the chain corresponds to 174-202 (GWSRYIPEGMQCSCGIDYYTLKPEVNNES). Residue glutamate 201 participates in Zn(2+) binding. Residues 203–224 (FVIYMFVVHFTIPMIVIFFCYG) traverse the membrane as a helical segment. At 225-252 (QLVFTVKEAAAQQQESATTQKAEKEVTR) the chain is on the cytoplasmic side. The chain crosses the membrane as a helical span at residues 253–274 (MVIIMVIAFLICWVPYASVAFY). Residues 275-286 (IFTHQGSNFGPI) are Extracellular-facing. Zn(2+) is bound at residue glutamine 279. A helical transmembrane segment spans residues 287-308 (FMTLPAFFAKSSSIYNPVIYIM). Lysine 296 is subject to N6-(retinylidene)lysine. Over 309-348 (MNKQFRNCMLTTLCCGKNPLGDDEASTTGSKTETSQVAPA) the chain is Cytoplasmic. 2 S-palmitoyl cysteine lipidation sites follow: cysteine 322 and cysteine 323. Residues 330–348 (DDEASTTGSKTETSQVAPA) form an interaction with SAG region. Residue serine 334 is modified to Phosphoserine. Phosphothreonine occurs at positions 335 and 336. Residue serine 338 is modified to Phosphoserine. Phosphothreonine is present on residues threonine 340 and threonine 342. Position 343 is a phosphoserine (serine 343).

The protein belongs to the G-protein coupled receptor 1 family. Opsin subfamily. In terms of assembly, homodimer. May form a complex composed of RHO, GRK1 and RCVRN in a Ca(2+)-dependent manner; RCVRN prevents the interaction between GRK1 and RHO. Interacts with GRK1. Interacts (phosphorylated form) with SAG. Interacts with GNAT1. Interacts with GNAT3. SAG and G-proteins compete for a common binding site. Interacts with PRCD; the interaction promotes PRCD stability. Forms a complex with ASAP1 and ARF4. Forms a complex with ASAP1, RAB11A, Rabin8/RAB3IP, ARF4 and RAB11FIP3; the complex regulates Golgi-to-cilia rhodopsin/RHO transport in photoreceptors. Phosphorylated on some or all of the serine and threonine residues present in the C-terminal region. In terms of processing, contains one covalently linked retinal chromophore. Upon light absorption, the covalently bound 11-cis-retinal is converted to all-trans-retinal. After hydrolysis of the Schiff base and release of the covalently bound all-trans-retinal, active rhodopsin is regenerated by binding of a fresh molecule of 11-cis-retinal.

Its subcellular location is the membrane. The protein resides in the cell projection. It is found in the cilium. It localises to the photoreceptor outer segment. Its function is as follows. Photoreceptor required for image-forming vision at low light intensity. Required for photoreceptor cell viability after birth. Light-induced isomerization of 11-cis to all-trans retinal triggers a conformational change that activates signaling via G-proteins. Subsequent receptor phosphorylation mediates displacement of the bound G-protein alpha subunit by the arrestin SAG and terminates signaling. The protein is Rhodopsin (RHO) of Felis catus (Cat).